Here is a 901-residue protein sequence, read N- to C-terminus: Protein translocase subunit SecA (901 aa).

ATP contacts are provided by residues Gln87, 105-109 (GEGKT), and Asp512. 4 residues coordinate Zn(2+): Cys885, Cys887, Cys896, and His897.

Belongs to the SecA family. As to quaternary structure, monomer and homodimer. Part of the essential Sec protein translocation apparatus which comprises SecA, SecYEG and auxiliary proteins SecDF-YajC and YidC. Requires Zn(2+) as cofactor.

Its subcellular location is the cell inner membrane. It is found in the cytoplasm. It catalyses the reaction ATP + H2O + cellular proteinSide 1 = ADP + phosphate + cellular proteinSide 2.. Its function is as follows. Part of the Sec protein translocase complex. Interacts with the SecYEG preprotein conducting channel. Has a central role in coupling the hydrolysis of ATP to the transfer of proteins into and across the cell membrane, serving both as a receptor for the preprotein-SecB complex and as an ATP-driven molecular motor driving the stepwise translocation of polypeptide chains across the membrane. The sequence is that of Protein translocase subunit SecA from Salmonella agona (strain SL483).